Consider the following 360-residue polypeptide: tRNA pseudouridine synthase D (360 aa).

Residue aspartate 76 is the Nucleophile of the active site. Residues 151–332 (GMPNFFGYQR…HGIYKEKNAW (182 aa)) enclose the TRUD domain.

It belongs to the pseudouridine synthase TruD family.

It carries out the reaction uridine(13) in tRNA = pseudouridine(13) in tRNA. Functionally, responsible for synthesis of pseudouridine from uracil-13 in transfer RNAs. The protein is tRNA pseudouridine synthase D of Nitratiruptor sp. (strain SB155-2).